Consider the following 524-residue polypeptide: Probable malate:quinone oxidoreductase (524 aa).

Belongs to the MQO family. FAD serves as cofactor.

The enzyme catalyses (S)-malate + a quinone = a quinol + oxaloacetate. Its pathway is carbohydrate metabolism; tricarboxylic acid cycle; oxaloacetate from (S)-malate (quinone route): step 1/1. The chain is Probable malate:quinone oxidoreductase from Blochmanniella floridana.